We begin with the raw amino-acid sequence, 425 residues long: Histidine--tRNA ligase 2 (425 aa).

Belongs to the class-II aminoacyl-tRNA synthetase family. As to quaternary structure, homodimer.

The protein resides in the cytoplasm. The enzyme catalyses tRNA(His) + L-histidine + ATP = L-histidyl-tRNA(His) + AMP + diphosphate + H(+). In Shouchella clausii (strain KSM-K16) (Alkalihalobacillus clausii), this protein is Histidine--tRNA ligase 2.